We begin with the raw amino-acid sequence, 81 residues long: Large ribosomal subunit protein bL31B (81 aa).

The protein belongs to the bacterial ribosomal protein bL31 family. Type B subfamily. In terms of assembly, part of the 50S ribosomal subunit.

This chain is Large ribosomal subunit protein bL31B, found in Lactococcus lactis subsp. cremoris (strain MG1363).